Here is a 339-residue protein sequence, read N- to C-terminus: Fructose-1,6-bisphosphatase isozyme 2 (339 aa).

The tract at residues 3–10 is important for interaction with ALDOA; sequence DRSPFETD. AMP contacts are provided by residues Val18 and 28–32; that span reads TGELT. Residues Asp69 and Glu98 each coordinate Mg(2+). 113–114 serves as a coordination point for AMP; the sequence is KY. Positions 119, 121, and 122 each coordinate Mg(2+). Asp122 is a binding site for substrate. Arg141 contacts AMP. The Nuclear localization signal motif lies at 204–208; sequence KKKGK. Substrate is bound at residue 213 to 216; the sequence is NEGY. Phosphotyrosine occurs at positions 216 and 219. Residues 245-249, Tyr265, and Lys275 each bind substrate; that span reads YVGSM. Mg(2+) is bound at residue Glu281.

Belongs to the FBPase class 1 family. Homotetramer. Interacts with ALDOA; the interaction blocks inhibition by physiological concentrations of AMP and reduces inhibition by Ca(2+). Interacts with alpha-actinin and F-actin. It depends on Mg(2+) as a cofactor.

The protein localises to the cell junction. Its subcellular location is the cytoplasm. The protein resides in the nucleus. It localises to the myofibril. It is found in the sarcomere. The protein localises to the z line. It catalyses the reaction beta-D-fructose 1,6-bisphosphate + H2O = beta-D-fructose 6-phosphate + phosphate. Its pathway is carbohydrate biosynthesis; gluconeogenesis. Its activity is regulated as follows. Subject to complex allosteric regulation. The enzyme can assume an active R-state, or an inactive T-state. Intermediate conformations may exist. AMP acts as an allosteric inhibitor. Fructose 2,6-bisphosphate acts as a competitive inhibitor. Strongly inhibited by Ca(2+). Functionally, catalyzes the hydrolysis of fructose 1,6-bisphosphate to fructose 6-phosphate in the presence of divalent cations and probably participates in glycogen synthesis from carbohydrate precursors, such as lactate. This Oryctolagus cuniculus (Rabbit) protein is Fructose-1,6-bisphosphatase isozyme 2 (FBP2).